Reading from the N-terminus, the 216-residue chain is Kynurenine formamidase (216 aa).

A substrate-binding site is contributed by tryptophan 25. Residues histidine 55, histidine 59, and aspartate 61 each contribute to the Zn(2+) site. The Proton donor/acceptor role is filled by histidine 65. 2 residues coordinate Zn(2+): histidine 167 and glutamate 179.

The protein belongs to the Cyclase 1 superfamily. KynB family. In terms of assembly, homodimer. Zn(2+) serves as cofactor.

It catalyses the reaction N-formyl-L-kynurenine + H2O = L-kynurenine + formate + H(+). It participates in amino-acid degradation; L-tryptophan degradation via kynurenine pathway; L-kynurenine from L-tryptophan: step 2/2. In terms of biological role, catalyzes the hydrolysis of N-formyl-L-kynurenine to L-kynurenine, the second step in the kynurenine pathway of tryptophan degradation. The sequence is that of Kynurenine formamidase from Cupriavidus necator (strain ATCC 17699 / DSM 428 / KCTC 22496 / NCIMB 10442 / H16 / Stanier 337) (Ralstonia eutropha).